A 352-amino-acid chain; its full sequence is Mannonate dehydratase (352 aa).

This sequence belongs to the mannonate dehydratase family. The cofactor is Fe(2+). Requires Mn(2+) as cofactor.

The catalysed reaction is D-mannonate = 2-dehydro-3-deoxy-D-gluconate + H2O. It participates in carbohydrate metabolism; pentose and glucuronate interconversion. Its function is as follows. Catalyzes the dehydration of D-mannonate. This Paraburkholderia phytofirmans (strain DSM 17436 / LMG 22146 / PsJN) (Burkholderia phytofirmans) protein is Mannonate dehydratase.